A 213-amino-acid chain; its full sequence is Thymidylate kinase (213 aa).

10 to 17 (GLEGAGKT) contacts ATP.

It belongs to the thymidylate kinase family.

It carries out the reaction dTMP + ATP = dTDP + ADP. Functionally, phosphorylation of dTMP to form dTDP in both de novo and salvage pathways of dTTP synthesis. The chain is Thymidylate kinase from Escherichia coli O7:K1 (strain IAI39 / ExPEC).